We begin with the raw amino-acid sequence, 342 residues long: Isopentenyl-diphosphate delta-isomerase (342 aa).

A substrate-binding site is contributed by Arg-12–Lys-13. FMN-binding positions include Ala-71–Thr-73, Ser-101, and Asn-129. A substrate-binding site is contributed by Ser-101 to Arg-103. A substrate-binding site is contributed by Gln-163. Mg(2+) is bound at residue Glu-164. Residues Lys-195, Thr-225, Gly-272 to Arg-274, and Ala-293 to Arg-294 each bind FMN.

This sequence belongs to the IPP isomerase type 2 family. In terms of assembly, homooctamer. Dimer of tetramers. FMN serves as cofactor. NADPH is required as a cofactor. The cofactor is Mg(2+).

Its subcellular location is the cytoplasm. It catalyses the reaction isopentenyl diphosphate = dimethylallyl diphosphate. In terms of biological role, involved in the biosynthesis of isoprenoids. Catalyzes the 1,3-allylic rearrangement of the homoallylic substrate isopentenyl (IPP) to its allylic isomer, dimethylallyl diphosphate (DMAPP). This chain is Isopentenyl-diphosphate delta-isomerase, found in Mycolicibacterium gilvum (strain PYR-GCK) (Mycobacterium gilvum (strain PYR-GCK)).